We begin with the raw amino-acid sequence, 733 residues long: Protein ROG3 (733 aa).

The PY-motif motif lies at 460–463; that stretch reads PPNY. The disordered stretch occupies residues 518–566; the sequence is RDNLGLPPSASSAAASRSLSPLLNVPAPEDGTERILPQSALGPNSGSVP. Residues 523-540 show a composition bias toward low complexity; the sequence is LPPSASSAAASRSLSPLL. The short motif at 625–628 is the PY-motif element; sequence PPSY. 2 disordered regions span residues 636-658 and 693-733; these read QPRK…SIPT and ELTS…GNKR. A compositionally biased stretch (low complexity) spans 646 to 658; sequence RNSSTTLSSSIPT.

Belongs to the arrestin family. As to quaternary structure, interacts with RSP5 via its 2 PY-motifs.

In terms of biological role, involved in resistance to GST substrate o-dinitrobenzene (o-DNB). The chain is Protein ROG3 (ROG3) from Saccharomyces cerevisiae (strain ATCC 204508 / S288c) (Baker's yeast).